The chain runs to 294 residues: Shikimate dehydrogenase (NADP(+)) (294 aa).

Shikimate-binding positions include 14–16 (SKS) and T61. The active-site Proton acceptor is the K65. D77 contributes to the NADP(+) binding site. Shikimate-binding residues include N86 and D102. NADP(+) is bound by residues 140–144 (GSGGA) and L235. Residue Y237 coordinates shikimate. G259 serves as a coordination point for NADP(+).

This sequence belongs to the shikimate dehydrogenase family. As to quaternary structure, homodimer.

The enzyme catalyses shikimate + NADP(+) = 3-dehydroshikimate + NADPH + H(+). It functions in the pathway metabolic intermediate biosynthesis; chorismate biosynthesis; chorismate from D-erythrose 4-phosphate and phosphoenolpyruvate: step 4/7. Its function is as follows. Involved in the biosynthesis of the chorismate, which leads to the biosynthesis of aromatic amino acids. Catalyzes the reversible NADPH linked reduction of 3-dehydroshikimate (DHSA) to yield shikimate (SA). The chain is Shikimate dehydrogenase (NADP(+)) from Blochmanniella floridana.